The primary structure comprises 864 residues: MGCWGQLLVWFGAAGAILCSSPGSQETFLRSSPLPLASPSPRDPKVSAPPSILEPASPLNSPGTEGSWLFSTCGASGRHGPTQTQCDGAYAGTSVVVTVGAAGQLRGVQLWRVPGPGQYLISAYGAAGGKGAKNHLSRAHGVFVSAIFSLGLGESLYILVGQQGEDACPGGSPESQLVCLGESRAVEEHAAMDGSEGVPGSRRWAGGGGGGGGATYVFRVRAGELEPLLVAAGGGGRAYLRPRDRGRTQASPEKLENRSEAPGSGGRGGAAGGGGGWTSRAPSPQAGRSLQEGAEGGQGCSEAWATLGWAAAGGFGGGGGACTAGGGGGGYRGGDASETDNLWADGEDGVSFIHPSSELFLQPLAVTENHGEVEIRRHLNCSHCPLRDCQWQAELQLAECLCPEGMELAVDNVTCMDLHKPPGPLVLMVAVVATSTLSLLMVCGVLILVKQKKWQGLQEMRLPSPELELSKLRTSAIRTAPNPYYCQVGLGPAQSWPLPPGVTEVSPANVTLLRALGHGAFGEVYEGLVIGLPGDSSPLQVAIKTLPELCSPQDELDFLMEALIISKFRHQNIVRCVGLSLRATPRLILLELMSGGDMKSFLRHSRPHLGQPSPLVMRDLLQLAQDIAQGCHYLEENHFIHRDIAARNCLLSCAGPSRVAKIGDFGMARDIYRASYYRRGDRALLPVKWMPPEAFLEGIFTSKTDSWSFGVLLWEIFSLGYMPYPGRTNQEVLDFVVGGGRMDPPRGCPGPVYRIMTQCWQHEPELRPSFASILERLQYCTQDPDVLNSLLPMELGPTPEEEGTSGLGNRSLECLRPPQPQELSPEKLKSWGGSPLGPWLSSGLKPLKSRGLQPQNLWNPTYRS.

The signal sequence occupies residues 1–16 (MGCWGQLLVWFGAAGA). Over 17-424 (ILCSSPGSQE…CMDLHKPPGP (408 aa)) the chain is Extracellular. Residues 30-40 (RSSPLPLASPS) are compositionally biased toward low complexity. Residues 30 to 64 (RSSPLPLASPSPRDPKVSAPPSILEPASPLNSPGT) are disordered. Disulfide bonds link cysteine 73–cysteine 86 and cysteine 168–cysteine 179. A disordered region spans residues 239 to 297 (YLRPRDRGRTQASPEKLENRSEAPGSGGRGGAAGGGGGWTSRAPSPQAGRSLQEGAEGG). Residues 241 to 259 (RPRDRGRTQASPEKLENRS) are compositionally biased toward basic and acidic residues. Asparagine 257 is a glycosylation site (N-linked (GlcNAc...) asparagine). Positions 263-277 (GSGGRGGAAGGGGGW) are enriched in gly residues. A disulfide bridge connects residues cysteine 300 and cysteine 322. Asparagine 380 and asparagine 412 each carry an N-linked (GlcNAc...) asparagine glycan. Residues 425-449 (LVLMVAVVATSTLSLLMVCGVLILV) form a helical membrane-spanning segment. Residues 450-864 (KQKKWQGLQE…QNLWNPTYRS (415 aa)) lie on the Cytoplasmic side of the membrane. The Protein kinase domain maps to 510 to 786 (VTLLRALGHG…LQYCTQDPDV (277 aa)). ATP contacts are provided by residues 516 to 524 (LGHGAFGEV) and lysine 544. The Proton acceptor role is filled by aspartate 643. At tyrosine 676 the chain carries Phosphotyrosine; by autocatalysis. Disordered stretches follow at residues 790–830 (LLPM…KLKS) and 842–864 (SGLK…TYRS). Over residues 852–864 (LQPQNLWNPTYRS) the composition is skewed to polar residues.

The protein belongs to the protein kinase superfamily. Tyr protein kinase family. Insulin receptor subfamily. In terms of assembly, homodimer; homodimerizes following ligand-binding. Part of a complex including LTK, TNK2 and GRB2, in which GRB2 promotes LTK recruitment by TNK2. Phosphorylated at tyrosine residues by autocatalysis, which activates kinase activity. In terms of tissue distribution, expressed in non-hematopoietic cell lines and T- and B-cell lines.

The protein resides in the cell membrane. The catalysed reaction is L-tyrosyl-[protein] + ATP = O-phospho-L-tyrosyl-[protein] + ADP + H(+). With respect to regulation, activated by ligand-binding, leading to homodimerization and autophosphorylation. In terms of biological role, receptor with a tyrosine-protein kinase activity. Following activation by ALKAL1 or ALKAL2 ligands at the cell surface, transduces an extracellular signal into an intracellular response. Ligand-binding to the extracellular domain induces tyrosine kinase activation, leading to activation of the mitogen-activated protein kinase (MAPK) pathway. Phosphorylates almost exclusively at the first tyrosine of the Y-x-x-x-Y-Y motif. The exact function of this protein is not known; studies with chimeric proteins demonstrate its ability to promote growth and specifically neurite outgrowth, and cell survival. Involved in regulation of the secretory pathway involving endoplasmic reticulum (ER) export sites (ERESs) and ER to Golgi transport. The protein is Leukocyte tyrosine kinase receptor of Homo sapiens (Human).